We begin with the raw amino-acid sequence, 758 residues long: DNA ligase (758 aa).

The interval 1 to 28 (MPENFGAMRQDGLVSTSESDSPAPAATP) is disordered. Residues 60–64 (DAEFD), 109–110 (SL), and glutamate 148 each bind NAD(+). The active-site N6-AMP-lysine intermediate is the lysine 150. Residues arginine 171, glutamate 208, lysine 324, and lysine 348 each coordinate NAD(+). Zn(2+) is bound by residues cysteine 442, cysteine 445, cysteine 461, and cysteine 467. The region spanning 660–749 (SVRRTLAGLT…PDHSAEAEEN (90 aa)) is the BRCT domain. The segment at 735-758 (LLAHGPDHSAEAEENESEGSTTND) is disordered.

The protein belongs to the NAD-dependent DNA ligase family. LigA subfamily. It depends on Mg(2+) as a cofactor. Requires Mn(2+) as cofactor.

The catalysed reaction is NAD(+) + (deoxyribonucleotide)n-3'-hydroxyl + 5'-phospho-(deoxyribonucleotide)m = (deoxyribonucleotide)n+m + AMP + beta-nicotinamide D-nucleotide.. DNA ligase that catalyzes the formation of phosphodiester linkages between 5'-phosphoryl and 3'-hydroxyl groups in double-stranded DNA using NAD as a coenzyme and as the energy source for the reaction. It is essential for DNA replication and repair of damaged DNA. This is DNA ligase from Renibacterium salmoninarum (strain ATCC 33209 / DSM 20767 / JCM 11484 / NBRC 15589 / NCIMB 2235).